Reading from the N-terminus, the 163-residue chain is Nucleotide-binding protein YajQ (163 aa).

This sequence belongs to the YajQ family.

Nucleotide-binding protein. This chain is Nucleotide-binding protein YajQ, found in Escherichia coli O127:H6 (strain E2348/69 / EPEC).